Here is an 814-residue protein sequence, read N- to C-terminus: MYFDRTKINVESMKQAILERVYCGVVQTPQSASTRDIFTAVAKTVLEWMAKGWLKTQSSYYDNDVKRVYYISMEFLLGRSLKSNLLNLGLLDLVKEALFDLGYDFDQLVEMEHDAGLGNGGLGRLAACFLDSMATLEIPAYGYGLRYDYGIFDQKIENGFQVESPDEWLRYGNPWEICRGEYLYPVHFYGKVKHSIDSRGRDVAELVDSQEVLAMAYDVPVPGFNNDAVNSLRLWQAQSRHGFEFSYFNHGNYIRAIEDIALAGNITRVLYPNDSISEGQELRLKQEYFLVSATIQDILRRYTKTHLSLDKLSEKVSVQLNDTHPALGIAEMMRLLVDREELDWDVAWDATTKIFNYTNHTILPEALERWSLDLFSKVLPRHLEIIYEINARWLAKVSQKYPGDNDKRRALSIIEEGSSKFVNMANLAVVGTNKVNGVSTFHSQLIKSTLFKDFVEFFPDKFINVTNGITPRRWLALSNKKLSSLLNRTIGTEYLTNLTHLHKVIPLAEDSGFREEWRNIKIQNKEELAARIYKELGVTVNPQSIFDCHIKRIHEYKRQLMNILRVIYFYNEIRNGSGEIVPTTVIFGGKAAPGYAMAKLIIKLINNVAAVVNNDPKVNDQLKVIFWPNYRVSLAEAIIPATDLSEQISTAGMEASGTGNMKFALNGALTIGTMDGANIEMAEHIGKEHMFIFGLLEEEISELRKEYYPQGICNANPTIQEILDMIAQAKFSQEDKDLFKPIVNRLLNEGDPFFVLADLEAYINTQNRVASLFKQPEEWTKKSIYNVGGIGFFSSDRSIAEYASNIWNVSRPTS.

Residue lysine 662 is modified to N6-(pyridoxal phosphate)lysine.

It belongs to the glycogen phosphorylase family. It depends on pyridoxal 5'-phosphate as a cofactor.

The catalysed reaction is [(1-&gt;4)-alpha-D-glucosyl](n) + phosphate = [(1-&gt;4)-alpha-D-glucosyl](n-1) + alpha-D-glucose 1-phosphate. In terms of biological role, phosphorylase is an important allosteric enzyme in carbohydrate metabolism. Enzymes from different sources differ in their regulatory mechanisms and in their natural substrates. However, all known phosphorylases share catalytic and structural properties. This chain is Glycogen phosphorylase (glgP), found in Chlamydia trachomatis serovar D (strain ATCC VR-885 / DSM 19411 / UW-3/Cx).